Reading from the N-terminus, the 74-residue chain is UPF0291 protein EF_0064 (74 aa).

Positions 53 to 74 (YDPTGEDVTPEKLKEEQQKYFD) are disordered. The span at 61–74 (TPEKLKEEQQKYFD) shows a compositional bias: basic and acidic residues.

The protein belongs to the UPF0291 family.

Its subcellular location is the cytoplasm. The sequence is that of UPF0291 protein EF_0064 from Enterococcus faecalis (strain ATCC 700802 / V583).